Here is a 557-residue protein sequence, read N- to C-terminus: Urocanate hydratase (557 aa).

NAD(+) is bound by residues 53–54, Gln-131, 177–179, 197–202, 243–244, 264–268, 274–275, and 323–324; these read GG, GMG, ECQQSR, NA, QTSAH, YL, and YG. Cys-411 is an active-site residue. NAD(+) contacts are provided by residues 455-456 and Gly-493; that span reads RE.

Homodimer. NAD(+) is required as a cofactor.

The protein localises to the cytoplasm. It catalyses the reaction 4-imidazolone-5-propanoate = trans-urocanate + H2O. The protein operates within amino-acid degradation; L-histidine degradation into L-glutamate; N-formimidoyl-L-glutamate from L-histidine: step 2/3. In terms of biological role, catalyzes the conversion of urocanate to 4-imidazolone-5-propionate. The sequence is that of Urocanate hydratase from Pseudomonas putida (Arthrobacter siderocapsulatus).